Consider the following 133-residue polypeptide: Putative pre-16S rRNA nuclease (133 aa).

Belongs to the YqgF nuclease family.

Its subcellular location is the cytoplasm. Could be a nuclease involved in processing of the 5'-end of pre-16S rRNA. The protein is Putative pre-16S rRNA nuclease of Alcanivorax borkumensis (strain ATCC 700651 / DSM 11573 / NCIMB 13689 / SK2).